The primary structure comprises 634 residues: DNA-directed RNA polymerase subunit gamma (634 aa).

Residues cysteine 74, cysteine 76, cysteine 89, and cysteine 92 each contribute to the Zn(2+) site. Positions 471, 473, and 475 each coordinate Mg(2+).

This sequence belongs to the RNA polymerase beta' chain family. RpoC1 subfamily. In cyanobacteria the RNAP catalytic core is composed of 2 alpha, 1 beta, 1 beta', 1 gamma and 1 omega subunit. When a sigma factor is associated with the core the holoenzyme is formed, which can initiate transcription. The cofactor is Mg(2+). Requires Zn(2+) as cofactor.

It carries out the reaction RNA(n) + a ribonucleoside 5'-triphosphate = RNA(n+1) + diphosphate. Its function is as follows. DNA-dependent RNA polymerase catalyzes the transcription of DNA into RNA using the four ribonucleoside triphosphates as substrates. This chain is DNA-directed RNA polymerase subunit gamma, found in Synechococcus sp. (strain WH7803).